A 271-amino-acid chain; its full sequence is Ribosomal RNA small subunit methyltransferase A (271 aa).

S-adenosyl-L-methionine-binding residues include His-11, Leu-13, Gly-38, Glu-59, Asp-84, and Asn-109.

The protein belongs to the class I-like SAM-binding methyltransferase superfamily. rRNA adenine N(6)-methyltransferase family. RsmA subfamily.

The protein resides in the cytoplasm. The enzyme catalyses adenosine(1518)/adenosine(1519) in 16S rRNA + 4 S-adenosyl-L-methionine = N(6)-dimethyladenosine(1518)/N(6)-dimethyladenosine(1519) in 16S rRNA + 4 S-adenosyl-L-homocysteine + 4 H(+). Specifically dimethylates two adjacent adenosines (A1518 and A1519) in the loop of a conserved hairpin near the 3'-end of 16S rRNA in the 30S particle. May play a critical role in biogenesis of 30S subunits. This chain is Ribosomal RNA small subunit methyltransferase A, found in Trichormus variabilis (strain ATCC 29413 / PCC 7937) (Anabaena variabilis).